Here is a 404-residue protein sequence, read N- to C-terminus: Formate-dependent phosphoribosylglycinamide formyltransferase (404 aa).

N(1)-(5-phospho-beta-D-ribosyl)glycinamide contacts are provided by residues 25–26 (EL) and E85. ATP is bound by residues R118, K159, 164–169 (SSGKGQ), 199–202 (EGFI), and E207. Residues 123–318 (RLAAEELGLP…EFELHARAIL (196 aa)) form the ATP-grasp domain. Mg(2+) contacts are provided by E277 and E289. Residues D296, K365, and 372 to 373 (RR) contribute to the N(1)-(5-phospho-beta-D-ribosyl)glycinamide site.

This sequence belongs to the PurK/PurT family. In terms of assembly, homodimer.

The catalysed reaction is N(1)-(5-phospho-beta-D-ribosyl)glycinamide + formate + ATP = N(2)-formyl-N(1)-(5-phospho-beta-D-ribosyl)glycinamide + ADP + phosphate + H(+). The protein operates within purine metabolism; IMP biosynthesis via de novo pathway; N(2)-formyl-N(1)-(5-phospho-D-ribosyl)glycinamide from N(1)-(5-phospho-D-ribosyl)glycinamide (formate route): step 1/1. Its function is as follows. Involved in the de novo purine biosynthesis. Catalyzes the transfer of formate to 5-phospho-ribosyl-glycinamide (GAR), producing 5-phospho-ribosyl-N-formylglycinamide (FGAR). Formate is provided by PurU via hydrolysis of 10-formyl-tetrahydrofolate. The polypeptide is Formate-dependent phosphoribosylglycinamide formyltransferase (Burkholderia lata (strain ATCC 17760 / DSM 23089 / LMG 22485 / NCIMB 9086 / R18194 / 383)).